A 166-amino-acid chain; its full sequence is Dynein regulatory complex protein 8 (166 aa).

One can recognise an EF-hand domain in the interval 95–130 (DDYHTLLRAFRAFDPDGRGFIDAESFKSLLTGKGEA).

This sequence belongs to the DRC8 family. In terms of assembly, component of the nexin-dynein regulatory complex (N-DRC).

It localises to the cytoplasm. Its subcellular location is the cytoskeleton. It is found in the flagellum axoneme. Component of the nexin-dynein regulatory complex (N-DRC), a key regulator of ciliary/flagellar motility which maintains the alignment and integrity of the distal axoneme and regulates microtubule sliding in motile axonemes. The protein is Dynein regulatory complex protein 8 of Chlamydomonas reinhardtii (Chlamydomonas smithii).